Consider the following 426-residue polypeptide: Serine--tRNA ligase (426 aa).

230 to 232 (TAE) serves as a coordination point for L-serine. 261–263 (RSE) lines the ATP pocket. Glu284 serves as a coordination point for L-serine. 348 to 351 (EISS) provides a ligand contact to ATP. Ser384 serves as a coordination point for L-serine.

The protein belongs to the class-II aminoacyl-tRNA synthetase family. Type-1 seryl-tRNA synthetase subfamily. In terms of assembly, homodimer. The tRNA molecule binds across the dimer.

It localises to the cytoplasm. It catalyses the reaction tRNA(Ser) + L-serine + ATP = L-seryl-tRNA(Ser) + AMP + diphosphate + H(+). It carries out the reaction tRNA(Sec) + L-serine + ATP = L-seryl-tRNA(Sec) + AMP + diphosphate + H(+). It functions in the pathway aminoacyl-tRNA biosynthesis; selenocysteinyl-tRNA(Sec) biosynthesis; L-seryl-tRNA(Sec) from L-serine and tRNA(Sec): step 1/1. Functionally, catalyzes the attachment of serine to tRNA(Ser). Is also able to aminoacylate tRNA(Sec) with serine, to form the misacylated tRNA L-seryl-tRNA(Sec), which will be further converted into selenocysteinyl-tRNA(Sec). The polypeptide is Serine--tRNA ligase (Phenylobacterium zucineum (strain HLK1)).